Consider the following 395-residue polypeptide: Zinc-regulated GTPase metalloprotein activator 1A (395 aa).

A disordered region spans residues 1–22 (MLPAVGSADEEEDPAEEDCPEL). Acidic residues predominate over residues 8-20 (ADEEEDPAEEDCP). Residues 17–24 (EDCPELVP) carry the psi-PxLVp motif motif. Position 49 to 56 (49 to 56 (GYLGAGKT)) interacts with GTP. Positions 107, 109, and 110 each coordinate Zn(2+). The short motif at 107–110 (CLCC) is the CXCC motif element. GTP contacts are provided by residues 110–114 (CSVKD) and 203–206 (NKTD). Positions 274 to 377 (IVTITFEVPG…ILKQLFIATV (104 aa)) constitute a CobW C-terminal domain.

This sequence belongs to the SIMIBI class G3E GTPase family. ZNG1 subfamily. As to expression, ubiquitously expressed. Up-regulated in cultured astrocytes treated with dopamine.

The protein resides in the nucleus. The catalysed reaction is GTP + H2O = GDP + phosphate + H(+). Functionally, zinc chaperone that directly transfers zinc cofactor to target metalloproteins, thereby activating them. Catalyzes zinc insertion into the active site of methionine aminopeptidase METAP1, which function to cleave the initiator methionine from polypeptides during or after protein translation. Mechanistically, the N-terminal psi-PxLVp motif binds to the C6H2-type zinc finger of inactive form of METAP1. After formation of the docked complex, zinc is transferred from the CXCC motif in the GTPase domain of ZNG1A to the zinc binding site in the peptidase domain of METAP1 in a process requiring GTP hydrolysis. GTP/GDP exchange is required for release of active METAP1. The protein is Zinc-regulated GTPase metalloprotein activator 1A of Homo sapiens (Human).